The sequence spans 477 residues: Sulfate adenylyltransferase subunit 1 (477 aa).

A tr-type G domain is found at 22–239 (KDMLRFITCG…TVQISHDAPL (218 aa)). Positions 31–38 (GSVDDGKS) are G1. 31-38 (GSVDDGKS) is a GTP binding site. A G2 region spans residues 89 to 93 (GITID). The G3 stretch occupies residues 110–113 (DCPG). GTP-binding positions include 110-114 (DCPGH) and 165-168 (NKMD). Residues 165–168 (NKMD) form a G4 region. The interval 202–204 (SAL) is G5.

It belongs to the TRAFAC class translation factor GTPase superfamily. Classic translation factor GTPase family. CysN/NodQ subfamily. In terms of assembly, heterodimer composed of CysD, the smaller subunit, and CysN.

It catalyses the reaction sulfate + ATP + H(+) = adenosine 5'-phosphosulfate + diphosphate. It participates in sulfur metabolism; hydrogen sulfide biosynthesis; sulfite from sulfate: step 1/3. In terms of biological role, with CysD forms the ATP sulfurylase (ATPS) that catalyzes the adenylation of sulfate producing adenosine 5'-phosphosulfate (APS) and diphosphate, the first enzymatic step in sulfur assimilation pathway. APS synthesis involves the formation of a high-energy phosphoric-sulfuric acid anhydride bond driven by GTP hydrolysis by CysN coupled to ATP hydrolysis by CysD. This chain is Sulfate adenylyltransferase subunit 1, found in Chromobacterium violaceum (strain ATCC 12472 / DSM 30191 / JCM 1249 / CCUG 213 / NBRC 12614 / NCIMB 9131 / NCTC 9757 / MK).